A 559-amino-acid chain; its full sequence is Extracellular matrix protein 1 (559 aa).

The N-terminal stretch at 1-19 is a signal peptide; it reads MGTVSRAALILACLALASA. 2 repeat units span residues 170–298 and 302–424. Positions 170–424 are 2 X approximate repeats; sequence HCQQGRRGVW…FAHLAPYPNY (255 aa). Residue N373 is glycosylated (N-linked (GlcNAc...) asparagine). N463 and N535 each carry an N-linked (GlcNAc...) (high mannose) asparagine glycan. The interval 535–559 is disordered; the sequence is NATGLGEQGPTRGTDANPAPGSKEE. S556 bears the Phosphoserine mark.

As to quaternary structure, interacts (via C-terminus) with HSPG2 (via C-terminus). Interacts with EFEMP1/FBLN3 and LAMB3. Interacts with MMP9. As to expression, expressed in the surrounding connective tissues of developing long bones, but not in the cartilage. The long isoform is expressed in a number of tissues including liver, heart and lungs. The short isoform is expressed in skin and cartilage-containing tissues such as tail and front paw. No expression is found in brain.

The protein resides in the secreted. The protein localises to the extracellular space. It localises to the extracellular matrix. Its function is as follows. Involved in endochondral bone formation as negative regulator of bone mineralization. Stimulates the proliferation of endothelial cells and promotes angiogenesis. Inhibits MMP9 proteolytic activity. This Mus musculus (Mouse) protein is Extracellular matrix protein 1 (Ecm1).